Here is a 570-residue protein sequence, read N- to C-terminus: Glycine--tRNA ligase (570 aa).

2 residues coordinate substrate: arginine 99 and glutamate 165. ATP is bound by residues 197 to 199 (RNE), 207 to 212 (LRLREF), 324 to 325 (EC), and 443 to 446 (GIDR). 212–216 (FTQAE) contributes to the substrate binding site. 439–443 (EPSFG) contributes to the substrate binding site.

It belongs to the class-II aminoacyl-tRNA synthetase family.

It localises to the cytoplasm. The catalysed reaction is tRNA(Gly) + glycine + ATP = glycyl-tRNA(Gly) + AMP + diphosphate. Catalyzes the attachment of glycine to tRNA(Gly). The polypeptide is Glycine--tRNA ligase (Thermococcus kodakarensis (strain ATCC BAA-918 / JCM 12380 / KOD1) (Pyrococcus kodakaraensis (strain KOD1))).